Reading from the N-terminus, the 304-residue chain is Non-specific ribonucleoside hydrolase RihC (304 aa).

Residue His233 is part of the active site.

This sequence belongs to the IUNH family. RihC subfamily.

Hydrolyzes both purine and pyrimidine ribonucleosides with a broad-substrate specificity. The polypeptide is Non-specific ribonucleoside hydrolase RihC (Escherichia coli O127:H6 (strain E2348/69 / EPEC)).